A 411-amino-acid chain; its full sequence is Translation initiation factor 2 subunit gamma (411 aa).

The tr-type G domain occupies 9–203; the sequence is QAEVNIGMVG…AIEEFIPTPK (195 aa). Positions 18-25 are G1; the sequence is GHVDHGKT. Positions 21, 25, 46, and 48 each coordinate Mg(2+). 21–26 serves as a coordination point for GTP; that stretch reads DHGKTT. The segment at 46–50 is G2; that stretch reads GITIK. The Zn(2+) site is built by Cys61, Cys64, Cys73, and Cys76. Residues 90–93 are G3; it reads DSPG. GTP is bound by residues 146–149 and 181–183; these read NKIE and SAL. A G4 region spans residues 146 to 149; that stretch reads NKIE. The segment at 181-183 is G5; the sequence is SAL.

This sequence belongs to the TRAFAC class translation factor GTPase superfamily. Classic translation factor GTPase family. EIF2G subfamily. As to quaternary structure, heterotrimer composed of an alpha, a beta and a gamma chain. Mg(2+) is required as a cofactor.

The catalysed reaction is GTP + H2O = GDP + phosphate + H(+). EIF-2 functions in the early steps of protein synthesis by forming a ternary complex with GTP and initiator tRNA. In Pyrococcus furiosus (strain ATCC 43587 / DSM 3638 / JCM 8422 / Vc1), this protein is Translation initiation factor 2 subunit gamma.